A 29-amino-acid polypeptide reads, in one-letter code: Conotoxin SIVC (29 aa).

Ala-1 carries the N-acetylalanine; partial modification. Pro-2 is modified (4-hydroxyproline). O-linked (HexNAc...) threonine glycosylation is found at Thr-7 and Thr-9. 4-hydroxyproline is present on residues Pro-18 and Pro-22. A Cysteine amide modification is found at Cys-29.

It belongs to the conotoxin A superfamily. Post-translationally, O-linked glycans consist of Hex4-HexNAc2 hexasaccharides. In terms of processing, N-terminus is found to be free and N-acetylated, depending on the fraction studied. Contains 3 disulfide bonds. In terms of tissue distribution, expressed by the venom duct. Low expression in the distal venom duct sections.

The protein resides in the secreted. In terms of biological role, probable neurotoxin with ion channel inhibitor activity. The polypeptide is Conotoxin SIVC (Conus striatus (Striated cone)).